The chain runs to 470 residues: Poly(A) polymerase catalytic subunit (470 aa).

Active-site residues include Asp192 and Asp194.

This sequence belongs to the poxviridae poly(A) polymerase catalytic subunit family. Heterodimer of a large (catalytic) subunit and a small (regulatory) subunit.

The catalysed reaction is RNA(n) + ATP = RNA(n)-3'-adenine ribonucleotide + diphosphate. Functionally, polymerase that creates the 3'-poly(A) tail of mRNA's. The protein is Poly(A) polymerase catalytic subunit (PAPL) of Deerpox virus (strain Mule deer/United States/W-848-83/1983) (DPV).